The following is a 286-amino-acid chain: Pyridoxal kinase PdxY (286 aa).

Substrate contacts are provided by residues Ser9 and Thr44–Gln45. Residues Asp111, Ala143, Glu148, Lys181, and Arg208–Val211 contribute to the ATP site. Asp223 provides a ligand contact to substrate.

It belongs to the pyridoxine kinase family. PdxY subfamily. As to quaternary structure, homodimer. Requires Mg(2+) as cofactor.

It carries out the reaction pyridoxal + ATP = pyridoxal 5'-phosphate + ADP + H(+). It participates in cofactor metabolism; pyridoxal 5'-phosphate salvage; pyridoxal 5'-phosphate from pyridoxal: step 1/1. In terms of biological role, pyridoxal kinase involved in the salvage pathway of pyridoxal 5'-phosphate (PLP). Catalyzes the phosphorylation of pyridoxal to PLP. In Yersinia pseudotuberculosis serotype I (strain IP32953), this protein is Pyridoxal kinase PdxY.